The sequence spans 393 residues: 5-amino-6-(D-ribitylamino)uracil--L-tyrosine 4-hydroxyphenyl transferase (393 aa).

Positions 67-322 constitute a Radical SAM core domain; that stretch reads VTYVINRNIN…GQWIVNHQPS (256 aa). Cysteine 81, cysteine 85, and cysteine 88 together coordinate [4Fe-4S] cluster.

Belongs to the radical SAM superfamily. CofH family. In terms of assembly, consists of two subunits, CofG and CofH. Requires [4Fe-4S] cluster as cofactor.

The catalysed reaction is 5-amino-6-(D-ribitylamino)uracil + L-tyrosine + S-adenosyl-L-methionine = 5-amino-5-(4-hydroxybenzyl)-6-(D-ribitylimino)-5,6-dihydrouracil + 2-iminoacetate + 5'-deoxyadenosine + L-methionine + H(+). The protein operates within cofactor biosynthesis; coenzyme F0 biosynthesis. Catalyzes the radical-mediated synthesis of 5-amino-5-(4-hydroxybenzyl)-6-(D-ribitylimino)-5,6-dihydrouracil from 5-amino-6-(D-ribitylamino)uracil and L-tyrosine. The polypeptide is 5-amino-6-(D-ribitylamino)uracil--L-tyrosine 4-hydroxyphenyl transferase (Thermosynechococcus vestitus (strain NIES-2133 / IAM M-273 / BP-1)).